The sequence spans 288 residues: Syntaxin-1A (288 aa).

Positions 1-13 are enriched in basic and acidic residues; sequence MKDRTQELRTAKD. Positions 1 to 20 are disordered; that stretch reads MKDRTQELRTAKDSDDDDDV. Topologically, residues 1-265 are cytoplasmic; it reads MKDRTQELRT…KYQSKARRKK (265 aa). A phosphoserine mark is found at Ser14, Ser64, and Ser95. Residues 68–109 are a coiled coil; the sequence is DEKTKEELEELMSDIKKTANKVRSKLKSIEQSIEQEEGLNRS. Ser188 carries the post-translational modification Phosphoserine; by DAPK1. Positions 192 to 254 constitute a t-SNARE coiled-coil homology domain; sequence LSEIETRHSE…ERAVSDTKKA (63 aa). Residues Lys252, Lys253, and Lys256 each participate in a glycyl lysine isopeptide (Lys-Gly) (interchain with G-Cter in SUMO) cross-link. Residues 266 to 288 traverse the membrane as a helical; Anchor for type IV membrane protein segment; it reads IMIVICCVVLGIVIASTFGGIFG.

The protein belongs to the syntaxin family. In terms of assembly, part of the SNARE core complex containing SNAP25, VAMP2 and STX1A; this complex constitutes the basic catalytic machinery of the complex neurotransmitter release apparatus. The SNARE complex interacts with CPLX1. Interacts with STXBP1. The interaction with STXBP1 promotes assembly of the SNARE complex. Interacts (via C-terminus) with KCNB1 (via C-terminus); the interaction increases in a calcium-dependent manner and induces a pore-independent enhancement of exocytosis in neuroendocrine cells, chromaffin cells, pancreatic beta cells and from the soma of dorsal root ganglia (DRG) neurons. Interacts with SYTL4. Interacts with STXBP6. Interacts with PLCL1 (via C2 domain). Interacts with OTOF. Interacts with LGI3. Interacts (via the H3 domain) with SLC6A4 (via the N-terminus); this interaction regulates SLC4A6 channel conductance in thalamocortical neurons. Interacts with SYT6 and SYT8; the interaction is Ca(2+)-dependent. Interacts with VAMP8. Interacts with SNAP23. Interacts with VAPA and SYBU. Interacts with PRRT2. Interacts with SEPT8. Interacts with STXBP5L. Interacts with synaptotagmin-1/SYT1. Interacts with SEPTIN5; in the cerebellar cortex. Interacts with SEPTIN4; in the striatum. Post-translationally, phosphorylated by CK2. Phosphorylation at Ser-188 by DAPK1 significantly decreases its interaction with STXBP1. In terms of processing, sumoylated, sumoylation is required for regulation of synaptic vesicle endocytosis. (Microbial infection) Targeted and hydrolyzed by C.botulinum neurotoxin type C (BoNT/C) which inhibits neurotransmitter release. Probably hydrolyzes the 253-Lys-|-Ala-254 bond.

It localises to the cytoplasmic vesicle. Its subcellular location is the secretory vesicle. The protein localises to the synaptic vesicle membrane. It is found in the synapse. The protein resides in the synaptosome. It localises to the cell membrane. Its function is as follows. Plays an essential role in hormone and neurotransmitter calcium-dependent exocytosis and endocytosis. Part of the SNARE (Soluble NSF Attachment Receptor) complex composed of SNAP25, STX1A and VAMP2 which mediates the fusion of synaptic vesicles with the presynaptic plasma membrane. STX1A and SNAP25 are localized on the plasma membrane while VAMP2 resides in synaptic vesicles. The pairing of the three SNAREs from the N-terminal SNARE motifs to the C-terminal anchors leads to the formation of the SNARE complex, which brings membranes into close proximity and results in final fusion. Participates in the calcium-dependent regulation of acrosomal exocytosis in sperm. Also plays an important role in the exocytosis of hormones such as insulin or glucagon-like peptide 1 (GLP-1). In Bos taurus (Bovine), this protein is Syntaxin-1A (STX1A).